The following is a 394-amino-acid chain: MKKVDRWLLPDGIEEVLPEEASRVEGLRRRLVDLFQSWGYDYVIPPMVEFIDSLLTGSGEDAYLDTFKITDQLSGKTMGIRADITPQAARMDAHSLQREGLNRLCYAGHVMYTKPKGPLASRTPIQVGVELFGESGLDADIEVISLLLETLEAAGLPDLYIDIGHVGVYRALIEEAGISKEQEEVYFELLQAKSINSIESWVANNITDAKMAEWLLALPRLAGGNHILAEAKALFEDAPAEVSAAIDELEMIDSVLTERYPHSKRYFDLSELRGYHYYTGVIFGAFAPGLGNAIANGGRYDHVGEAFGRARAATGFAADLMSISRVTGRCELAPSGIYVEDSDADGIWAKIKQLRASGERVVCALAGQTAPYKHQHCNRKLIKQGEEFVVAPIK.

The protein belongs to the class-II aminoacyl-tRNA synthetase family. HisZ subfamily. Heteromultimer composed of HisG and HisZ subunits.

Its subcellular location is the cytoplasm. The protein operates within amino-acid biosynthesis; L-histidine biosynthesis; L-histidine from 5-phospho-alpha-D-ribose 1-diphosphate: step 1/9. Its function is as follows. Required for the first step of histidine biosynthesis. May allow the feedback regulation of ATP phosphoribosyltransferase activity by histidine. The sequence is that of ATP phosphoribosyltransferase regulatory subunit from Saccharophagus degradans (strain 2-40 / ATCC 43961 / DSM 17024).